Here is a 521-residue protein sequence, read N- to C-terminus: Ribonuclease Y (521 aa).

Residues 5–25 (TVWILISILLATVGAVVGFFV) form a helical membrane-spanning segment. The segment at 87-117 (KQENRLMQKEENLDRKDETLDNRERQLEKKE) is disordered. In terms of domain architecture, KH spans 211 to 274 (TVSVVNLPND…ETARIALDKL (64 aa)). An HD domain is found at 337 to 430 (VLKHSMEVAY…VAAADALSAA (94 aa)).

This sequence belongs to the RNase Y family.

It is found in the cell membrane. Its function is as follows. Endoribonuclease that initiates mRNA decay. The polypeptide is Ribonuclease Y (Bacillus mycoides (strain KBAB4) (Bacillus weihenstephanensis)).